The following is a 407-amino-acid chain: Argininosuccinate synthase (407 aa).

Residues 16–24 (AYSGGLDTS) and Ala44 each bind ATP. Residues Tyr96 and Ser101 each coordinate L-citrulline. Gly126 provides a ligand contact to ATP. Residues Thr128, Asn132, and Asp133 each coordinate L-aspartate. Position 132 (Asn132) interacts with L-citrulline. The L-citrulline site is built by Arg136, Ser185, Ser194, Glu270, and Tyr282.

Belongs to the argininosuccinate synthase family. Type 1 subfamily. Homotetramer.

The protein resides in the cytoplasm. It carries out the reaction L-citrulline + L-aspartate + ATP = 2-(N(omega)-L-arginino)succinate + AMP + diphosphate + H(+). It participates in amino-acid biosynthesis; L-arginine biosynthesis; L-arginine from L-ornithine and carbamoyl phosphate: step 2/3. This is Argininosuccinate synthase from Shewanella denitrificans (strain OS217 / ATCC BAA-1090 / DSM 15013).